A 577-amino-acid polypeptide reads, in one-letter code: Peroxynitrite isomerase THAP4 (577 aa).

The THAP-type zinc-finger motif lies at 1–85 (MVICCAAVNC…LKPTAVPSIF (85 aa)). Positions 84–221 (IFHLTEKKRG…DKSGISMDDF (138 aa)) are disordered. The segment covering 157–170 (AAQEAASQEQAQQA) has biased composition (low complexity). Residue serine 163 is modified to Phosphoserine. Residues 235-238 (LHSY) carry the HCFC1-binding motif (HBM) motif. Serine 239 carries the phosphoserine modification. A disordered region spans residues 240–324 (FSSKHTRERP…AVQSEHSDAS (85 aa)). Over residues 247–266 (ERPSVPREPIDRKRLKKDVE) the composition is skewed to basic and acidic residues. A compositionally biased stretch (low complexity) spans 290 to 300 (TATPQKPSQSP). Positions 415-577 (PPKMNPVVEP…LHVTYKKVTP (163 aa)) are nitrobindin. Residues threonine 444 and histidine 567 each coordinate heme b.

In the C-terminal section; belongs to the nitrobindin family. As to quaternary structure, homodimer. Heme b is required as a cofactor.

The protein localises to the cytoplasm. Its subcellular location is the nucleus. The catalysed reaction is peroxynitrite = nitrate. Its pathway is nitrogen metabolism. In terms of biological role, heme-binding protein able to scavenge peroxynitrite and to protect free L-tyrosine against peroxynitrite-mediated nitration, by acting as a peroxynitrite isomerase that converts peroxynitrite to nitrate. Therefore, this protein likely plays a role in peroxynitrite sensing and in the detoxification of reactive nitrogen and oxygen species (RNS and ROS, respectively). Is able to bind nitric oxide (NO) in vitro, but may act as a sensor of peroxynitrite levels in vivo, possibly modulating the transcriptional activity residing in the N-terminal region. The protein is Peroxynitrite isomerase THAP4 of Homo sapiens (Human).